Reading from the N-terminus, the 78-residue chain is Small ribosomal subunit protein uS17 (78 aa).

It belongs to the universal ribosomal protein uS17 family. In terms of assembly, part of the 30S ribosomal subunit.

Functionally, one of the primary rRNA binding proteins, it binds specifically to the 5'-end of 16S ribosomal RNA. The sequence is that of Small ribosomal subunit protein uS17 from Sinorhizobium medicae (strain WSM419) (Ensifer medicae).